Here is a 536-residue protein sequence, read N- to C-terminus: MTTTPTSSGRRSISSIRRTSSASKKPVLQSEESESGSGSINENTSKPDSPLAQPVSDGERTVKKLRLSKALTINEGTTVFDACRRMAARRVDAVLLTDSSALLSGIVTDKDIATRVIAEGLRPEHTLVSKVMTRNPIFVTSDSLAIEALQKMVQGKFRHLPVVENGEVIALLDITKCLYDAISRMEKAAEQGSALATAVEERHWGSGNFAFIDTLRERMFKPALSTIVTENTKVALVSASDPVFVASKKMRDLRVNSVIIAVGNKIHGILTSKDILMRVVAQNLSPELTLVEKVMTPNPECASIETTILDALHIMHDGKFLHLPVFDKDGFAVACLDVLQITHAAISTVENNSSGAVNDMANTMMQKFWDSALALEPPEDYETHSDMSAMLINSEGKQSCPSQGLVSSFAFKFEDRKGRVQRFNSTGESFEELMSVVMQRCEADSGLQIMYQDDEGDKVLISRDSDLVAAVTFARSLGQKVLRLHLDFTETIAPLETIADLSEGNGGCVWWQTGVLAGAIVLTSIGLFVYLKRSKK.

The span at 1-23 (MTTTPTSSGRRSISSIRRTSSAS) shows a compositional bias: low complexity. The interval 1–60 (MTTTPTSSGRRSISSIRRTSSASKKPVLQSEESESGSGSINENTSKPDSPLAQPVSDGER) is disordered. CBS domains lie at 66–124 (RLSK…LRPE), 132–187 (MTRN…RMEK), 228–287 (VTEN…LSPE), and 295–354 (MTPN…NNSS). In terms of domain architecture, PB1 spans 406–489 (VSSFAFKFED…KVLRLHLDFT (84 aa)). The chain crosses the membrane as a helical span at residues 509-529 (VWWQTGVLAGAIVLTSIGLFV).

It is found in the membrane. This Arabidopsis thaliana (Mouse-ear cress) protein is CBS domain-containing protein CBSCBSPB2 (CBSCBSPB2).